The chain runs to 231 residues: Staphylococcal superantigen-like 7 (231 aa).

An N-terminal signal peptide occupies residues 1 to 30; the sequence is MKLKTLAKATLALGLLTTGVITSEGQAVQA.

Belongs to the staphylococcal/streptococcal toxin family. In terms of assembly, interacts with host IgA and complement C5; these interactions inhibits complement activation.

The protein localises to the secreted. In terms of biological role, plays a role in the inhibition of host complement-mediated lysis and serum bactericidal activity by interacting with complement component C5. Affects all three pathways of complement activation and inhibits the cleavage of C5 by preventing its binding to C5 convertases. In turn, prevents C5a-mediated neutrophil migration. The sequence is that of Staphylococcal superantigen-like 7 from Staphylococcus aureus (strain NCTC 8325 / PS 47).